The primary structure comprises 89 residues: Elongation factor 1-beta (89 aa).

Belongs to the EF-1-beta/EF-1-delta family.

In terms of biological role, promotes the exchange of GDP for GTP in EF-1-alpha/GDP, thus allowing the regeneration of EF-1-alpha/GTP that could then be used to form the ternary complex EF-1-alpha/GTP/AAtRNA. The sequence is that of Elongation factor 1-beta from Methanocella arvoryzae (strain DSM 22066 / NBRC 105507 / MRE50).